The following is a 279-amino-acid chain: Probable endonuclease 4 (279 aa).

Zn(2+)-binding residues include H69, H109, E145, D179, H182, H216, D229, H231, and E261.

This sequence belongs to the AP endonuclease 2 family. Zn(2+) serves as cofactor.

The catalysed reaction is Endonucleolytic cleavage to 5'-phosphooligonucleotide end-products.. Endonuclease IV plays a role in DNA repair. It cleaves phosphodiester bonds at apurinic or apyrimidinic (AP) sites, generating a 3'-hydroxyl group and a 5'-terminal sugar phosphate. The sequence is that of Probable endonuclease 4 from Buchnera aphidicola subsp. Schizaphis graminum (strain Sg).